A 496-amino-acid polypeptide reads, in one-letter code: Putative aldehyde dehydrogenase-like protein C922.07c (496 aa).

NAD(+) is bound at residue 241-246 (GSTKVG). Glu263 (proton acceptor) is an active-site residue. Catalysis depends on Cys297, which acts as the Nucleophile.

This sequence belongs to the aldehyde dehydrogenase family.

The protein resides in the cytoplasm. Its subcellular location is the nucleus. The protein is Putative aldehyde dehydrogenase-like protein C922.07c of Schizosaccharomyces pombe (strain 972 / ATCC 24843) (Fission yeast).